Consider the following 475-residue polypeptide: ATP synthase subunit beta (475 aa).

Position 152-159 (152-159 (GGAGVGKT)) interacts with ATP.

This sequence belongs to the ATPase alpha/beta chains family. In terms of assembly, F-type ATPases have 2 components, CF(1) - the catalytic core - and CF(0) - the membrane proton channel. CF(1) has five subunits: alpha(3), beta(3), gamma(1), delta(1), epsilon(1). CF(0) has three main subunits: a(1), b(2) and c(9-12). The alpha and beta chains form an alternating ring which encloses part of the gamma chain. CF(1) is attached to CF(0) by a central stalk formed by the gamma and epsilon chains, while a peripheral stalk is formed by the delta and b chains.

The protein resides in the cell inner membrane. It carries out the reaction ATP + H2O + 4 H(+)(in) = ADP + phosphate + 5 H(+)(out). In terms of biological role, produces ATP from ADP in the presence of a proton gradient across the membrane. The catalytic sites are hosted primarily by the beta subunits. The sequence is that of ATP synthase subunit beta from Wolbachia sp. subsp. Drosophila simulans (strain wRi).